A 179-amino-acid chain; its full sequence is Large ribosomal subunit protein uL5 (179 aa).

It belongs to the universal ribosomal protein uL5 family. In terms of assembly, part of the 50S ribosomal subunit; part of the 5S rRNA/L5/L18/L25 subcomplex. Contacts the 5S rRNA and the P site tRNA. Forms a bridge to the 30S subunit in the 70S ribosome.

Its function is as follows. This is one of the proteins that bind and probably mediate the attachment of the 5S RNA into the large ribosomal subunit, where it forms part of the central protuberance. In the 70S ribosome it contacts protein S13 of the 30S subunit (bridge B1b), connecting the 2 subunits; this bridge is implicated in subunit movement. Contacts the P site tRNA; the 5S rRNA and some of its associated proteins might help stabilize positioning of ribosome-bound tRNAs. The protein is Large ribosomal subunit protein uL5 of Chromobacterium violaceum (strain ATCC 12472 / DSM 30191 / JCM 1249 / CCUG 213 / NBRC 12614 / NCIMB 9131 / NCTC 9757 / MK).